We begin with the raw amino-acid sequence, 361 residues long: Feruloyl CoA ortho-hydroxylase 2 (361 aa).

The 102-residue stretch at 211 to 312 folds into the Fe2OG dioxygenase domain; it reads GSTRINLNYY…RISVPIFVSP (102 aa). Tyr220 contacts 2-oxoglutarate. 3 residues coordinate Fe cation: His235, Asp237, and His293. 2-oxoglutarate-binding residues include Arg303 and Ser305.

Belongs to the iron/ascorbate-dependent oxidoreductase family. L-ascorbate is required as a cofactor. It depends on Fe(2+) as a cofactor. In terms of tissue distribution, low expression in roots.

It catalyses the reaction (E)-feruloyl-CoA + 2-oxoglutarate + O2 = (E)-6-hydroxyferuloyl-CoA + succinate + CO2. The enzyme catalyses (E)-6-hydroxyferuloyl-CoA = scopoletin + CoA. Its function is as follows. 2-oxoglutarate (OG)- and Fe(II)-dependent dioxygenase (2OGD)involved in scopoletin biosynthesis. Converts feruloyl CoA into 6'-hydroxyferuloyl CoA but has no activity with ferulic acid, feruloylquinic acid, caffeic acid, caffeoyl CoA, p-coumaric acid, cinnamic acid, cinnamoyl CoA or benzoyl CoA. This Arabidopsis thaliana (Mouse-ear cress) protein is Feruloyl CoA ortho-hydroxylase 2.